Reading from the N-terminus, the 382-residue chain is Galactokinase (382 aa).

34–37 (EHTD) contributes to the substrate binding site. 124–130 (GAGLSSS) is an ATP binding site. The Mg(2+) site is built by Ser-130 and Glu-162. Asp-174 serves as the catalytic Proton acceptor. Tyr-223 lines the substrate pocket.

Belongs to the GHMP kinase family. GalK subfamily.

It localises to the cytoplasm. The enzyme catalyses alpha-D-galactose + ATP = alpha-D-galactose 1-phosphate + ADP + H(+). Its pathway is carbohydrate metabolism; galactose metabolism. Its function is as follows. Catalyzes the transfer of the gamma-phosphate of ATP to D-galactose to form alpha-D-galactose-1-phosphate (Gal-1-P). The sequence is that of Galactokinase from Escherichia coli (strain SMS-3-5 / SECEC).